Here is a 208-residue protein sequence, read N- to C-terminus: MEIAVLDIKGKETGRKAKLSDSVFAIEPNDHAVYLDVKQYLANQRQGTHKAKERAEIKGSTRKIKKQKGTGTARAGSIKSPIFKGGGRVFGPRPRNYGFKLNKNLKRLARKSALSIKANDKAIMVIEDFSFDTPKTKNFTEVLKALGIESKKSLIVLGDSNKNVYLSSRNLKTSEVISSSELSTYKILNAKSIVFLEGSLEGIESKLS.

The interval arginine 45–serine 77 is disordered.

This sequence belongs to the universal ribosomal protein uL4 family. Part of the 50S ribosomal subunit.

In terms of biological role, one of the primary rRNA binding proteins, this protein initially binds near the 5'-end of the 23S rRNA. It is important during the early stages of 50S assembly. It makes multiple contacts with different domains of the 23S rRNA in the assembled 50S subunit and ribosome. Its function is as follows. Forms part of the polypeptide exit tunnel. In Christiangramia forsetii (strain DSM 17595 / CGMCC 1.15422 / KT0803) (Gramella forsetii), this protein is Large ribosomal subunit protein uL4.